The following is a 496-amino-acid chain: Transcription factor CP2 (496 aa).

The Grh/CP2 DB domain maps to 61-300 (ENKILPFQYV…SPGFNSSHSS (240 aa)). Residues 133 to 386 (EHQQLEGWRW…LFNALKGRMV (254 aa)) are DNA-binding. 2 disordered regions span residues 238-268 (FKPKGADRKQKTDREKMEKRTPHEKEKYQPS) and 296-327 (SSHSSFSIGEGNGSPNHQPEPPPPIADNLLPT). Basic and acidic residues predominate over residues 241–265 (KGADRKQKTDREKMEKRTPHEKEKY).

This sequence belongs to the grh/CP2 family. CP2 subfamily. In terms of assembly, component of the SSP (stage selector protein) complex, which appears to be a heteromer of TFCP2 and 2 copies of NFE4. As to expression, expressed in the epiblast at the pre-primitive streak stage. At the primitive streak stage, expressed in the extending primitive streak and in the prospective neural plate. At stages 7 and 8, expressed in the neural folds, somites and in the regressing primitive streak. At stage 12, ubiquitously expressed in the whole embryo.

Its subcellular location is the nucleus. Binds the B-response element 5'-CAAGTCCAGGCAAGT-3' of the ENS1/ERNI promoter. May be the major transcription activator thus being essential for its expression. This chain is Transcription factor CP2 (TFCP2), found in Gallus gallus (Chicken).